A 468-amino-acid polypeptide reads, in one-letter code: Glutamate--tRNA ligase 2 (468 aa).

A 'HIGH' region motif is present at residues 9 to 19 (PSPTGFLHIGG). The 'KMSKS' region signature appears at 238–242 (KLSKR). Lysine 241 contributes to the ATP binding site.

Belongs to the class-I aminoacyl-tRNA synthetase family. Glutamate--tRNA ligase type 1 subfamily. In terms of assembly, monomer.

The protein localises to the cytoplasm. The enzyme catalyses tRNA(Glu) + L-glutamate + ATP = L-glutamyl-tRNA(Glu) + AMP + diphosphate. Catalyzes the attachment of glutamate to tRNA(Glu) in a two-step reaction: glutamate is first activated by ATP to form Glu-AMP and then transferred to the acceptor end of tRNA(Glu). This chain is Glutamate--tRNA ligase 2, found in Rhodospirillum centenum (strain ATCC 51521 / SW).